Here is a 125-residue protein sequence, read N- to C-terminus: MRIAGVNLPLNKHAVIALTHVYGIGKTSARNILERAGIDPAKKIAEMSDEEAHAIREIIAEEYKVEGQARGLQQLAVKRLMDIGCYRGLRHRRSLPVRGQRTQTNARTRKGKRKTVAGKKKAVKK.

Residues 94–125 (SLPVRGQRTQTNARTRKGKRKTVAGKKKAVKK) form a disordered region. Positions 107 to 125 (RTRKGKRKTVAGKKKAVKK) are enriched in basic residues.

The protein belongs to the universal ribosomal protein uS13 family. As to quaternary structure, part of the 30S ribosomal subunit. Forms a loose heterodimer with protein S19. Forms two bridges to the 50S subunit in the 70S ribosome.

Its function is as follows. Located at the top of the head of the 30S subunit, it contacts several helices of the 16S rRNA. In the 70S ribosome it contacts the 23S rRNA (bridge B1a) and protein L5 of the 50S subunit (bridge B1b), connecting the 2 subunits; these bridges are implicated in subunit movement. Contacts the tRNAs in the A and P-sites. The protein is Small ribosomal subunit protein uS13 of Prosthecochloris aestuarii (strain DSM 271 / SK 413).